Consider the following 330-residue polypeptide: 1-aminocyclopropane-1-carboxylate oxidase 2 (330 aa).

A Fe2OG dioxygenase domain is found at 153–253; the sequence is PNFGTKVSNY…RMSIASFYNP (101 aa). The Fe cation site is built by histidine 177, aspartate 179, and histidine 234.

This sequence belongs to the iron/ascorbate-dependent oxidoreductase family. Monomer. The cofactor is Fe cation.

It catalyses the reaction 1-aminocyclopropane-1-carboxylate + L-ascorbate + O2 = ethene + L-dehydroascorbate + hydrogen cyanide + CO2 + 2 H2O. It functions in the pathway alkene biosynthesis; ethylene biosynthesis via S-adenosyl-L-methionine; ethylene from S-adenosyl-L-methionine: step 2/2. The protein is 1-aminocyclopropane-1-carboxylate oxidase 2 (ACO2) of Malus domestica (Apple).